The sequence spans 116 residues: Prefoldin subunit beta (116 aa).

The protein belongs to the prefoldin subunit beta family. As to quaternary structure, heterohexamer of two alpha and four beta subunits.

It is found in the cytoplasm. Its function is as follows. Molecular chaperone capable of stabilizing a range of proteins. Seems to fulfill an ATP-independent, HSP70-like function in archaeal de novo protein folding. This chain is Prefoldin subunit beta (pfdB), found in Archaeoglobus fulgidus (strain ATCC 49558 / DSM 4304 / JCM 9628 / NBRC 100126 / VC-16).